The following is a 153-amino-acid chain: Ribosome maturation factor RimP (153 aa).

This sequence belongs to the RimP family.

The protein resides in the cytoplasm. Required for maturation of 30S ribosomal subunits. In Clostridium botulinum (strain Loch Maree / Type A3), this protein is Ribosome maturation factor RimP.